Reading from the N-terminus, the 718-residue chain is GMP synthase [glutamine-hydrolyzing] (718 aa).

The Glutamine amidotransferase type-1 domain maps to V43 to N247. Active-site for GATase activity residues include C128, H221, and E223. The region spanning Y248–R457 is the GMPS ATP-PPase domain. S275 to T281 serves as a coordination point for ATP.

As to quaternary structure, homodimer.

It catalyses the reaction XMP + L-glutamine + ATP + H2O = GMP + L-glutamate + AMP + diphosphate + 2 H(+). The protein operates within purine metabolism; GMP biosynthesis; GMP from XMP (L-Gln route): step 1/1. The chain is GMP synthase [glutamine-hydrolyzing] (guaA) from Dictyostelium discoideum (Social amoeba).